Here is a 214-residue protein sequence, read N- to C-terminus: Ribonuclease HII (214 aa).

The RNase H type-2 domain occupies 27–214 (SVVAGIDEAG…SPIKQMCAIV (188 aa)). Residues aspartate 33, glutamate 34, and aspartate 126 each coordinate a divalent metal cation.

It belongs to the RNase HII family. The cofactor is Mn(2+). Mg(2+) is required as a cofactor.

The protein resides in the cytoplasm. The enzyme catalyses Endonucleolytic cleavage to 5'-phosphomonoester.. Its function is as follows. Endonuclease that specifically degrades the RNA of RNA-DNA hybrids. The protein is Ribonuclease HII (rnhB) of Chlamydia pneumoniae (Chlamydophila pneumoniae).